Reading from the N-terminus, the 338-residue chain is Fructose-1,6-bisphosphatase class 1 (338 aa).

Residues Glu90, Asp112, Leu114, and Asp115 each coordinate Mg(2+). Substrate-binding positions include 115-118 (DGSS), Asn207, and Lys273. Glu279 contacts Mg(2+).

This sequence belongs to the FBPase class 1 family. In terms of assembly, homotetramer. Requires Mg(2+) as cofactor.

The protein localises to the cytoplasm. It catalyses the reaction beta-D-fructose 1,6-bisphosphate + H2O = beta-D-fructose 6-phosphate + phosphate. The protein operates within carbohydrate biosynthesis; gluconeogenesis. In Xanthomonas campestris pv. campestris (strain 8004), this protein is Fructose-1,6-bisphosphatase class 1.